Consider the following 431-residue polypeptide: Adenylosuccinate synthetase (431 aa).

GTP contacts are provided by residues G12–K18 and G40–T42. D13 (proton acceptor) is an active-site residue. 2 residues coordinate Mg(2+): D13 and G40. IMP-binding positions include D13–K16, N38–H41, T128, R142, Q225, T240, and R304. H41 acts as the Proton donor in catalysis. Substrate is bound at residue T300 to R306. GTP-binding positions include R306, K332–D334, and G414–G416.

It belongs to the adenylosuccinate synthetase family. Homodimer. Mg(2+) is required as a cofactor.

The protein resides in the cytoplasm. The enzyme catalyses IMP + L-aspartate + GTP = N(6)-(1,2-dicarboxyethyl)-AMP + GDP + phosphate + 2 H(+). It functions in the pathway purine metabolism; AMP biosynthesis via de novo pathway; AMP from IMP: step 1/2. Plays an important role in the de novo pathway of purine nucleotide biosynthesis. Catalyzes the first committed step in the biosynthesis of AMP from IMP. In Thermomicrobium roseum (strain ATCC 27502 / DSM 5159 / P-2), this protein is Adenylosuccinate synthetase.